Consider the following 288-residue polypeptide: Shikimate dehydrogenase (NADP(+)) (288 aa).

Residues 21–23 (SLS) and T68 contribute to the shikimate site. Residue K72 is the Proton acceptor of the active site. Residue E84 participates in NADP(+) binding. N93 and D108 together coordinate shikimate. NADP(+) contacts are provided by residues 132 to 136 (GNGGA) and L230. Shikimate is bound at residue Y232. G253 contributes to the NADP(+) binding site.

The protein belongs to the shikimate dehydrogenase family. As to quaternary structure, homodimer.

It catalyses the reaction shikimate + NADP(+) = 3-dehydroshikimate + NADPH + H(+). Its pathway is metabolic intermediate biosynthesis; chorismate biosynthesis; chorismate from D-erythrose 4-phosphate and phosphoenolpyruvate: step 4/7. In terms of biological role, involved in the biosynthesis of the chorismate, which leads to the biosynthesis of aromatic amino acids. Catalyzes the reversible NADPH linked reduction of 3-dehydroshikimate (DHSA) to yield shikimate (SA). The protein is Shikimate dehydrogenase (NADP(+)) of Gloeothece citriformis (strain PCC 7424) (Cyanothece sp. (strain PCC 7424)).